We begin with the raw amino-acid sequence, 614 residues long: Probable pectinesterase/pectinesterase inhibitor 13 (614 aa).

Residues 25-45 (IIVGTVSLLVVVAAIVGGAFA) form a helical membrane-spanning segment. The segment at 55–102 (QQQQQQQAKNHNKSGSGNNVVKDSDKKSPSPPTPSQKAPVSAAQSVKP) is disordered. 7 N-linked (GlcNAc...) asparagine glycosylation sites follow: Asn66, Asn128, Asn197, Asn243, Asn301, Asn351, and Asn367. The pectinesterase inhibitor 13 stretch occupies residues 103–255 (GQGDKIIQTL…QVLTSNSLAL (153 aa)). The interval 301–598 (NATVAKDGSG…YTVGPFLQGD (298 aa)) is pectinesterase 13. Residues Thr376 and Gln406 each contribute to the substrate site. Asp429 (proton donor; for pectinesterase activity) is an active-site residue. A disulfide bond links Cys443 and Cys463. Asp450 (nucleophile; for pectinesterase activity) is an active-site residue. 2 residues coordinate substrate: Arg518 and Trp520. Asn522 and Asn588 each carry an N-linked (GlcNAc...) asparagine glycan.

In the N-terminal section; belongs to the PMEI family. It in the C-terminal section; belongs to the pectinesterase family. Expressed in flower buds.

It is found in the membrane. The enzyme catalyses [(1-&gt;4)-alpha-D-galacturonosyl methyl ester](n) + n H2O = [(1-&gt;4)-alpha-D-galacturonosyl](n) + n methanol + n H(+). Its pathway is glycan metabolism; pectin degradation; 2-dehydro-3-deoxy-D-gluconate from pectin: step 1/5. Acts in the modification of cell walls via demethylesterification of cell wall pectin. In Arabidopsis thaliana (Mouse-ear cress), this protein is Probable pectinesterase/pectinesterase inhibitor 13 (PME13).